A 610-amino-acid polypeptide reads, in one-letter code: Phosphomethylpyrimidine synthase (610 aa).

Residues N216, M245, Y274, H310, 330-332 (SRG), 371-374 (DGLR), and E410 each bind substrate. H414 provides a ligand contact to Zn(2+). Substrate is bound at residue Y437. H478 lines the Zn(2+) pocket. Residues C558, C561, and C566 each coordinate [4Fe-4S] cluster.

Belongs to the ThiC family. Homodimer. [4Fe-4S] cluster serves as cofactor.

It catalyses the reaction 5-amino-1-(5-phospho-beta-D-ribosyl)imidazole + S-adenosyl-L-methionine = 4-amino-2-methyl-5-(phosphooxymethyl)pyrimidine + CO + 5'-deoxyadenosine + formate + L-methionine + 3 H(+). It functions in the pathway cofactor biosynthesis; thiamine diphosphate biosynthesis. Its function is as follows. Catalyzes the synthesis of the hydroxymethylpyrimidine phosphate (HMP-P) moiety of thiamine from aminoimidazole ribotide (AIR) in a radical S-adenosyl-L-methionine (SAM)-dependent reaction. This is Phosphomethylpyrimidine synthase from Allorhizobium ampelinum (strain ATCC BAA-846 / DSM 112012 / S4) (Agrobacterium vitis (strain S4)).